Here is a 518-residue protein sequence, read N- to C-terminus: Glutamate--cysteine ligase (518 aa).

Belongs to the glutamate--cysteine ligase type 1 family. Type 1 subfamily.

The enzyme catalyses L-cysteine + L-glutamate + ATP = gamma-L-glutamyl-L-cysteine + ADP + phosphate + H(+). Its pathway is sulfur metabolism; glutathione biosynthesis; glutathione from L-cysteine and L-glutamate: step 1/2. The protein is Glutamate--cysteine ligase of Cronobacter sakazakii (strain ATCC BAA-894) (Enterobacter sakazakii).